A 410-amino-acid chain; its full sequence is Argininosuccinate synthase (410 aa).

Residue 10 to 18 participates in ATP binding; that stretch reads AYSGGLDTS. L-citrulline-binding residues include tyrosine 88 and serine 93. ATP is bound at residue glycine 118. L-aspartate is bound by residues threonine 120, asparagine 124, and aspartate 125. Residue asparagine 124 coordinates L-citrulline. Arginine 128, serine 177, serine 186, glutamate 262, and tyrosine 274 together coordinate L-citrulline.

It belongs to the argininosuccinate synthase family. Type 1 subfamily. Homotetramer.

It localises to the cytoplasm. The catalysed reaction is L-citrulline + L-aspartate + ATP = 2-(N(omega)-L-arginino)succinate + AMP + diphosphate + H(+). The protein operates within amino-acid biosynthesis; L-arginine biosynthesis; L-arginine from L-ornithine and carbamoyl phosphate: step 2/3. The polypeptide is Argininosuccinate synthase (Thermoanaerobacter pseudethanolicus (strain ATCC 33223 / 39E) (Clostridium thermohydrosulfuricum)).